We begin with the raw amino-acid sequence, 289 residues long: Signal peptidase I (289 aa).

Topologically, residues 1–43 are cytoplasmic; it reads MKKLTSTTTTLWDNKLFINNLKNFMQTNTESNNNKTTAQEWKS. The chain crosses the membrane as a helical span at residues 44 to 64; sequence FILVVVIALMIRILIIESFVV. Topologically, residues 65–289 are periplasmic; it reads PTGSMKATIL…IFRNLYSIED (225 aa). Active-site residues include Ser68 and Lys131.

The protein belongs to the peptidase S26 family.

The protein localises to the cell inner membrane. It catalyses the reaction Cleavage of hydrophobic, N-terminal signal or leader sequences from secreted and periplasmic proteins.. The protein is Signal peptidase I (lepB) of Rickettsia bellii (strain OSU 85-389).